A 423-amino-acid polypeptide reads, in one-letter code: Carboxypeptidase S1 (423 aa).

Disulfide bonds link cysteine 8–cysteine 68, cysteine 55–cysteine 300, cysteine 223–cysteine 246, and cysteine 230–cysteine 239. Serine 143 is a catalytic residue. A glycan (N-linked (GlcNAc...) asparagine) is linked at asparagine 200. Residue aspartate 340 is part of the active site. Position 343 (cysteine 343) interacts with substrate. Residue histidine 397 is part of the active site. Glutamate 398 is a binding site for substrate.

It belongs to the peptidase S10 family.

It catalyses the reaction Preferential release of a C-terminal arginine or lysine residue.. This is Carboxypeptidase S1 from Penicillium janthinellum (Penicillium vitale).